We begin with the raw amino-acid sequence, 613 residues long: Azole resistance protein 1 (613 aa).

A disordered region spans residues 1–38 (MKGEPKTYSMSDLSYYGEKAQQQNEKQQKQYVVRRNST). At 1-70 (MKGEPKTYSM…PKGFILYASL (70 aa)) the chain is on the extracellular side. A helical membrane pass occupies residues 71–91 (IALALSLFLAALDIMIVSTII). Residues 92-102 (EEVAKQFGSYS) lie on the Cytoplasmic side of the membrane. Residues 103–123 (EIGWLFTGYSLPNALLALIWG) form a helical membrane-spanning segment. Over 124–134 (RIATPIGFKET) the chain is Extracellular. The helical transmembrane segment at 135–155 (MLFAIVIFEIGSLISALANSM) threads the bilayer. Over 156–163 (SMLIGGRV) the chain is Cytoplasmic. A helical membrane pass occupies residues 164–184 (IAGVGGCGIQSLSFVIGSTLV). Over 185-189 (EESQR) the chain is Extracellular. A helical transmembrane segment spans residues 190–210 (GILIAVLSCSFAIASVVGPFL). The Cytoplasmic segment spans residues 211 to 221 (GGVFTSSVTWR). A helical transmembrane segment spans residues 222–242 (WCFYVNLPIGGLAFFLFLFFY). The Extracellular segment spans residues 243–298 (NPGLSTFQETMDNIRKFPSQFIEIVRNVAYHLLKIKGFSKLNGWRKPFMELIFMYD). Residues 299 to 319 (IIEFVFCSAGFTCILLAFTFG) traverse the membrane as a helical segment. Residues 320 to 329 (GNRYAWNSAS) are Cytoplasmic-facing. Residues 330-350 (IIILFIIGIVLVVLAGIYDFL) traverse the membrane as a helical segment. Topologically, residues 351 to 375 (VFPKFNIVKATPHYQPLMSWTNIKK) are extracellular. Residues 376–396 (PGIFTVNIALFLTCAGYISQF) form a helical membrane-spanning segment. Residues 397–414 (TYIVQYFQLIYNDSAWRA) lie on the Cytoplasmic side of the membrane. Residues 415–435 (AVHLVACIISTVVTAILCGAI) form a helical membrane-spanning segment. The Extracellular segment spans residues 436–443 (TDKTRQIK). The helical transmembrane segment at 444-464 (PIIVISSIFGVVGAGILTLLN) threads the bilayer. The Cytoplasmic portion of the chain corresponds to 465 to 472 (NNANNSAH). A helical membrane pass occupies residues 473–493 (IGLLILPGVAFGGLAQSSMLA). Residues 494 to 581 (SQIQLDKKSP…SKLGNIISES (88 aa)) lie on the Extracellular side of the membrane. The chain crosses the membrane as a helical span at residues 582–602 (LTDVFYMALGFYALSLIFAVF). The Cytoplasmic segment spans residues 603–613 (ASNKKVTASLR).

This sequence belongs to the major facilitator superfamily.

The protein localises to the cell membrane. Functionally, transporter protein required for adaptation to high stress imposed by low-chain organic acids, in particular by acetic acid, and for resistance to azoles, especially to ketoconazole and fluconazole. This Saccharomyces cerevisiae (strain ATCC 204508 / S288c) (Baker's yeast) protein is Azole resistance protein 1 (AZR1).